Consider the following 108-residue polypeptide: UPF0145 protein YjfJ (108 aa).

Belongs to the UPF0145 family.

This chain is UPF0145 protein YjfJ (yjfJ), found in Lactococcus lactis subsp. lactis (strain IL1403) (Streptococcus lactis).